An 825-amino-acid polypeptide reads, in one-letter code: Endoglucanase C (825 aa).

An N-terminal signal peptide occupies residues 1–28 (MRNKLRRLLAIMMAVLLITSLFAPMVSA). The Proton donor role is filled by Glu219. Glu335 acts as the Nucleophile in catalysis. The segment covering 607 to 621 (DRESVPEPVEHDTKG) has biased composition (basic and acidic residues). The tract at residues 607-635 (DRESVPEPVEHDTKGDSALPSDFEDGTRQ) is disordered.

This sequence belongs to the glycosyl hydrolase 5 (cellulase A) family.

It carries out the reaction Endohydrolysis of (1-&gt;4)-beta-D-glucosidic linkages in cellulose, lichenin and cereal beta-D-glucans.. The chain is Endoglucanase C (celC) from Evansella cellulosilytica (strain ATCC 21833 / DSM 2522 / FERM P-1141 / JCM 9156 / N-4) (Bacillus cellulosilyticus).